An 818-amino-acid chain; its full sequence is Patatin-like phospholipase domain-containing protein YALI0D16379g (818 aa).

2 disordered regions span residues 1-50 (MLKL…RDVN) and 154-178 (EEKRRRGKSKKDKEGSEGDKTKTKE). Residues 22-38 (SQQLTLDSPEGSETSSR) show a composition bias toward polar residues. Positions 164–178 (KDKEGSEGDKTKTKE) are enriched in basic and acidic residues. The helical transmembrane segment at 223-243 (WPALFFIGMWLLFLTTIYASV) threads the bilayer. The region spanning 398–589 (LCLSGGGCFA…RTDIPVDALN (192 aa)) is the PNPLA domain. A GXSXG motif is present at residues 429 to 433 (GTSGG). The active-site Nucleophile is the serine 431. Aspartate 576 (proton acceptor) is an active-site residue. The tract at residues 781-805 (AGTDISSSNSDYDHEPQWEMDEGDS) is disordered.

It belongs to the PLPL family.

The protein localises to the membrane. Functionally, probable lipid hydrolase. This Yarrowia lipolytica (strain CLIB 122 / E 150) (Yeast) protein is Patatin-like phospholipase domain-containing protein YALI0D16379g.